A 1130-amino-acid chain; its full sequence is Serine/threonine-protein kinase LATS1 (1130 aa).

Residues 1 to 11 (MKRSEKPEGYR) are compositionally biased toward basic and acidic residues. Residues 1-71 (MKRSEKPEGY…PRQVRNPPKF (71 aa)) are disordered. Positions 19–30 (PASNYTVSSRQM) are enriched in polar residues. Residues 46-64 (DAAKAEHNMSKMSTEDPRQ) are compositionally biased toward basic and acidic residues. The 42-residue stretch at 100-141 (EVNPQMLQDLQAAGFDEDMVIQALQKTNNRSIEAAIEFISKM) folds into the UBA domain. The disordered stretch occupies residues 149-276 (EQMAAAAARP…SWEPNSQTKR (128 aa)). The segment covering 167–179 (NVQQSVNRKQSWK) has biased composition (polar residues). The span at 235–268 (NPPPPPQVRSVTPPPPPRGQTPPPRGTTPPPPSW) shows a compositional bias: pro residues. The residue at position 246 (T246) is a Phosphothreonine. At S278 the chain carries Phosphoserine. 4 disordered regions span residues 294–321 (GAWQEGYPPPPLNTSPMNPPNQGQRGIS), 365–405 (AGTV…NGSI), 432–484 (NWPQ…PSAT), and 515–631 (THPS…ESRI). Residues 300–312 (YPPPPLNTSPMNP) are compositionally biased toward pro residues. The short motif at 373 to 376 (PPPY) is the PPxY motif 1 element. Residues 381-405 (ANGQSPSALQTGGSAAPSSYTNGSI) are compositionally biased toward polar residues. The span at 434–447 (PQSSSAPAQSSPSS) shows a compositional bias: low complexity. Over residues 454 to 482 (WQPNIPVRSNSFNNPLGNRASHSANSQPS) the composition is skewed to polar residues. S464 bears the Phosphoserine; by NUAK1 and NUAK2 mark. The tract at residues 526–655 (TVQPSPFPEG…HVENVLKSHQ (130 aa)) is interaction with YAP1. A PPxY motif 2 motif is present at residues 556–559 (PPPY). Over residues 579–609 (PSKEDQPSLPKEDESEKSYENVDSGDKEKKQ) the composition is skewed to basic and acidic residues. Phosphoserine is present on S613. Basic and acidic residues predominate over residues 621-630 (KKDEERRESR). S674 carries the phosphoserine modification. The 306-residue stretch at 705-1010 (FVKIKTLGIG…ADEIKAHPFF (306 aa)) folds into the Protein kinase domain. Residues 711–719 (LGIGAFGEV) and K734 each bind ATP. D828 acts as the Proton acceptor in catalysis. S909 is subject to Phosphoserine; by STK3/MST2. Residues 1011–1090 (KTIDFSSDLR…RRFFDDNGYP (80 aa)) form the AGC-kinase C-terminal domain. Position 1079 is a phosphothreonine; by STK3/MST2 (T1079). Positions 1104–1130 (SQGSEQQSDEDDQNTGSEIKNRDLVYV) are disordered.

It belongs to the protein kinase superfamily. AGC Ser/Thr protein kinase family. In terms of assembly, complexes with CDK1 in early mitosis. LATS1-associated CDK1 has no mitotic cyclin partner and no apparent kinase activity. Binds phosphorylated ZYX, locating this protein to the mitotic spindle and suggesting a role for actin regulatory proteins during mitosis. Binds to and colocalizes with LIMK1 at the actomyosin contractile ring during cytokinesis. Interacts (via PPxY motif 2) with YAP1 (via WW domains). Interacts with MOB1A and MOB1B. Interacts with LIMD1, WTIP and AJUBA. Interacts with ESR1, DCAF1 and DCAF13; probably recruits DCAF1 and DCAF13 to ESR1 to promote ESR1 ubiquitination and ubiquitin-mediated proteasomal degradation. Interacts with STK3/MST2; this interaction is inhibited in the presence of DLG5. Interacts with SCRIB in the presence of DLG5. Interacts with WWTR1/TAZ. Interacts with WWC1, WWC2 and WWC3 (via their WW domains). The cofactor is Mg(2+). Post-translationally, autophosphorylated and phosphorylated during M-phase of the cell cycle. Phosphorylated by STK3/MST2 at Ser-909 and Thr-1079, which results in its activation. Phosphorylated by MAP4Ks; in parallel to STK3/MST2 and resulting to its activation. Phosphorylation at Ser-464 by NUAK1 and NUAK2 leads to decreased protein level and is required to regulate cellular senescence and cellular ploidy. In terms of tissue distribution, expressed in all adult tissues examined except for lung and kidney.

The protein resides in the cytoplasm. The protein localises to the cytoskeleton. Its subcellular location is the microtubule organizing center. It is found in the centrosome. It localises to the spindle. The protein resides in the midbody. The protein localises to the spindle pole body. The catalysed reaction is L-seryl-[protein] + ATP = O-phospho-L-seryl-[protein] + ADP + H(+). The enzyme catalyses L-threonyl-[protein] + ATP = O-phospho-L-threonyl-[protein] + ADP + H(+). Negative regulator of YAP1 in the Hippo signaling pathway that plays a pivotal role in organ size control and tumor suppression by restricting proliferation and promoting apoptosis. The core of this pathway is composed of a kinase cascade wherein STK3/MST2 and STK4/MST1, in complex with its regulatory protein SAV1, phosphorylates and activates LATS1/2 in complex with its regulatory protein MOB1, which in turn phosphorylates and inactivates YAP1 oncoprotein and WWTR1/TAZ. Phosphorylation of YAP1 by LATS1 inhibits its translocation into the nucleus to regulate cellular genes important for cell proliferation, cell death, and cell migration. Acts as a tumor suppressor which plays a critical role in maintenance of ploidy through its actions in both mitotic progression and the G1 tetraploidy checkpoint. Negatively regulates G2/M transition by down-regulating CDK1 kinase activity. Involved in the control of p53 expression. Affects cytokinesis by regulating actin polymerization through negative modulation of LIMK1. May also play a role in endocrine function. Plays a role in mammary gland epithelial cell differentiation, both through the Hippo signaling pathway and the intracellular estrogen receptor signaling pathway by promoting the degradation of ESR1. Acts as an activator of the NLRP3 inflammasome by mediating phosphorylation of 'Ser-265' of NLRP3 following NLRP3 palmitoylation, promoting NLRP3 activation by NEK7. The chain is Serine/threonine-protein kinase LATS1 from Homo sapiens (Human).